The sequence spans 335 residues: MALRWGIVSAGLISSDFTTVLRLLPRSEHQVVAVAARDLSRAKEFARKHDIPKAYGSYEELAKDPNVEVAYIGTQHPQHKATVLLCLAAGKAVLCEKPMGVNAAEVREMVAEARSRGLFLMEAIWTRFFPAVEALRSVLAQETLGDLRVVQANFGKSIANVPRSVDWAQAGGSLLDLGIYCLQFISMVYGGQKPEKISAVGRRYETGVDDTVSVLLQYPGGVQGSFTCSITSQLSNTVSVSGTKGMAQILDPCWCPTELVVKGEHKEFPLPSAPGEEFNYTNGMGMCYEAKHVRECLKKGLKESPMITLAESELLADILEEVRKAIGVTFPQDKC.

The protein belongs to the Gfo/Idh/MocA family. Homodimer. As to expression, liver, lens, spleen, kidney and small intestine.

It carries out the reaction (1R,2R)-1,2-dihydrobenzene-1,2-diol + NADP(+) = catechol + NADPH + H(+). The catalysed reaction is D-xylose + NADP(+) = D-xylono-1,5-lactone + NADPH + H(+). With respect to regulation, strongly inhibited by isoascorbic acid, 4-hydroxyacetophenone and chloromercuriphenylsulphonate. Stimulated by various salts. The chain is Trans-1,2-dihydrobenzene-1,2-diol dehydrogenase (DHDH) from Sus scrofa (Pig).